The sequence spans 257 residues: Neuroendocrine secretory protein 55 (257 aa).

Positions Met-1–Ala-46 are cleaved as a signal peptide. Positions Ser-61 to His-257 are disordered. The segment covering Ala-70–Ser-82 has biased composition (low complexity). Basic and acidic residues predominate over residues Glu-86–Cys-103. Residues Leu-104 to Pro-139 show a composition bias toward acidic residues. A compositionally biased stretch (basic and acidic residues) spans Glu-200 to Arg-211. Residues Pro-227–Arg-237 are compositionally biased toward basic residues.

The protein belongs to the NESP55 family. Post-translationally, binds keratan sulfate chains. In terms of processing, may be proteolytically processed to give rise to a number of active peptides.

The protein localises to the cytoplasmic vesicle. It localises to the secretory vesicle. The protein resides in the secreted. The polypeptide is Neuroendocrine secretory protein 55 (Mus musculus (Mouse)).